The chain runs to 401 residues: MKVFKDSVIYLVGELSSKLVPFLLLPYLSRKLGVEGYGSLSYYQTFLSLFLIVVSLTQEGAISRYFYFYGKRSLNLVVNTGYAYTTIIGSIILIGCWIAQSEILFYAALSSIFQSFLNVQLSVRQCQKKAWSYAFIQFSLTVTGAVFTVALLEYYQNDLVEKRILAILLSNLVVWFFSYFLYRKSTTSKKYQFKHYQSALFYILGFGLPLILHYASFFLKGQLDRIFIYHKFSETDLGLYAMGAQLALVVSIAIQALNKAIIPYFYEALKQKKLVVQQLHKWALFSFLLIPIPALIMWIIPEDVLVWILGSQFVGTKYYFILFLISTTLSIPYLILVNYLFYYGKNKLISQCSVLSTIIYVASLVALTFTEIKYIPYAGIIGSLSIIPILYFMTSKVSKTL.

11 helical membrane-spanning segments follow: residues 8-28 (VIYL…LPYL), 36-56 (GYGS…VVSL), 87-107 (IIGS…LFYA), 132-152 (SYAF…VALL), 162-182 (KRIL…YFLY), 199-219 (ALFY…SFFL), 237-257 (LGLY…IQAL), 282-302 (WALF…IIPE), 320-340 (FILF…VNYL), 352-372 (CSVL…FTEI), and 374-394 (YIPY…YFMT).

It belongs to the polysaccharide synthase family. HI_0867/HI_1700 subfamily.

It is found in the cell membrane. The chain is Lsg locus putative protein 1 from Haemophilus influenzae (strain ATCC 51907 / DSM 11121 / KW20 / Rd).